We begin with the raw amino-acid sequence, 430 residues long: UDP-glucose 6-dehydrogenase AglM (430 aa).

Cys-269 is a catalytic residue.

The protein belongs to the UDP-glucose/GDP-mannose dehydrogenase family.

The catalysed reaction is UDP-alpha-D-glucose + 2 NAD(+) + H2O = UDP-alpha-D-glucuronate + 2 NADH + 3 H(+). It functions in the pathway nucleotide-sugar biosynthesis; UDP-alpha-D-glucuronate biosynthesis; UDP-alpha-D-glucuronate from UDP-alpha-D-glucose: step 1/1. The protein operates within cell surface structure biogenesis; S-layer biogenesis. Activity improves as salinity decreases. Functionally, involved in the assembly of a N-linked pentasaccharide that decorates the S-layer glycoprotein and flagellins. Involved in the biosynthesis of the hexuronic acids found at both positions 2 and 3 of the pentasaccharide. The chain is UDP-glucose 6-dehydrogenase AglM (aglM) from Haloferax volcanii (strain ATCC 29605 / DSM 3757 / JCM 8879 / NBRC 14742 / NCIMB 2012 / VKM B-1768 / DS2) (Halobacterium volcanii).